A 497-amino-acid polypeptide reads, in one-letter code: Carboxylesterase (497 aa).

The active-site Acyl-ester intermediate is the S185. Active-site charge relay system residues include E319 and H415.

It belongs to the type-B carboxylesterase/lipase family.

Its subcellular location is the secreted. It carries out the reaction a carboxylic ester + H2O = an alcohol + a carboxylate + H(+). This is Carboxylesterase from Thermobifida fusca (strain YX).